Reading from the N-terminus, the 324-residue chain is Geranylgeranyl diphosphate synthase (324 aa).

Isopentenyl diphosphate contacts are provided by lysine 46, arginine 49, and histidine 78. Mg(2+) contacts are provided by aspartate 85 and aspartate 89. Residue arginine 94 participates in an all-trans-polyprenyl diphosphate binding. Residue arginine 95 coordinates isopentenyl diphosphate. An all-trans-polyprenyl diphosphate contacts are provided by lysine 176, threonine 177, glutamine 214, lysine 231, and lysine 241.

Belongs to the FPP/GGPP synthase family. Mg(2+) serves as cofactor.

The catalysed reaction is isopentenyl diphosphate + (2E,6E)-farnesyl diphosphate = (2E,6E,10E)-geranylgeranyl diphosphate + diphosphate. Its pathway is isoprenoid biosynthesis; geranylgeranyl diphosphate biosynthesis; geranylgeranyl diphosphate from farnesyl diphosphate and isopentenyl diphosphate: step 1/1. Its function is as follows. Catalyzes the sequential condensation of isopentenyl pyrophosphate with the allylic pyrophosphates to yield geranylgeranyl diphosphate (GGPP) which is a precursor of the ether-linked lipids. This chain is Geranylgeranyl diphosphate synthase, found in Methanosarcina mazei (strain ATCC BAA-159 / DSM 3647 / Goe1 / Go1 / JCM 11833 / OCM 88) (Methanosarcina frisia).